We begin with the raw amino-acid sequence, 345 residues long: MTIQLPPILIRADHLQTYDERKAIVASALESGYTHIILRPEDEALRHLGRYTAILADGKNLMYSGERIGVLLNLTGAEEMEEAYSLKNAVPNLIISPENWKVIPLENLISRFQNAETSVYICVKTPEEARLAFQTMEVGCDGIVITPDGPADLAAFSGIRNDEYPIVDLETAVVTKISTLSLGDRVCIDTCSLLERGEGMLIGSQSSCLFLVCSESFESEYVNSRPFRVNAGAVHSYILCPDGTTKYLSEIASGNELLSRMPDGNLRTVNVGRVKIEIRPMLYIEAKAGGKTYSVVLQNAETIRLGTPSGAVSVSDLAIGDLVYVRLESGGRHFGHTMAETICEK.

It belongs to the archaeal-type DHQ synthase family.

It carries out the reaction 2-amino-2,3,7-trideoxy-D-lyxo-hept-6-ulosonate + NAD(+) + H2O = 3-dehydroquinate + NH4(+) + NADH + H(+). Catalyzes the oxidative deamination and cyclization of 2-amino-3,7-dideoxy-D-threo-hept-6-ulosonic acid (ADH) to yield 3-dehydroquinate (DHQ), which is fed into the canonical shikimic pathway of aromatic amino acid biosynthesis. This Methanocorpusculum labreanum (strain ATCC 43576 / DSM 4855 / Z) protein is 3-dehydroquinate synthase.